The sequence spans 369 residues: tRNA-specific 2-thiouridylase MnmA (369 aa).

Residues 12 to 19 (GMSGGVDS) and Met-38 contribute to the ATP site. Residues 98 to 100 (NPD) are interaction with target base in tRNA. The active-site Nucleophile is the Cys-103. A disulfide bridge links Cys-103 with Cys-200. Gly-128 is an ATP binding site. The interval 150–152 (KDQ) is interaction with tRNA. Residue Cys-200 is the Cysteine persulfide intermediate of the active site. The segment at 312 to 313 (RY) is interaction with tRNA.

Belongs to the MnmA/TRMU family.

Its subcellular location is the cytoplasm. The enzyme catalyses S-sulfanyl-L-cysteinyl-[protein] + uridine(34) in tRNA + AH2 + ATP = 2-thiouridine(34) in tRNA + L-cysteinyl-[protein] + A + AMP + diphosphate + H(+). In terms of biological role, catalyzes the 2-thiolation of uridine at the wobble position (U34) of tRNA, leading to the formation of s(2)U34. The chain is tRNA-specific 2-thiouridylase MnmA from Tolumonas auensis (strain DSM 9187 / NBRC 110442 / TA 4).